Here is a 457-residue protein sequence, read N- to C-terminus: 5' exonuclease Apollo (457 aa).

A TBM motif is present at residues 425–437; sequence ELPKQYLLTPLNA.

The protein belongs to the DNA repair metallo-beta-lactamase (DRMBL) family. In terms of assembly, interacts with TERF2; the interaction is direct.

The protein resides in the chromosome. It localises to the telomere. The protein localises to the nucleus. The catalysed reaction is a beta-lactam + H2O = a substituted beta-amino acid. Its function is as follows. 5'-3' exonuclease that plays a central role in telomere maintenance and protection during S-phase. Participates in the protection of telomeres against non-homologous end-joining (NHEJ)-mediated repair, thereby ensuring that telomeres do not fuse. Plays a key role in telomeric loop (T loop) formation by being recruited by TERF2 at the leading end telomeres and by processing leading-end telomeres immediately after their replication via its exonuclease activity: generates 3' single-stranded overhang at the leading end telomeres avoiding blunt leading-end telomeres that are vulnerable to end-joining reactions and expose the telomere end in a manner that activates the DNA repair pathways. May be required for DNA interstrand cross-link repair. Possesses beta-lactamase activity, catalyzing the hydrolysis of penicillin G and nitrocefin. Exhibits no activity towards other beta-lactam antibiotic classes including cephalosporins (cefotaxime) and carbapenems (imipenem). In Gallus gallus (Chicken), this protein is 5' exonuclease Apollo (DCLRE1B).